Consider the following 99-residue polypeptide: Small ribosomal subunit protein bS18 (99 aa).

The segment covering 1–25 (MAEDHPSVDLDTHLSSPRESEESAP) has biased composition (basic and acidic residues). The disordered stretch occupies residues 1-28 (MAEDHPSVDLDTHLSSPRESEESAPKKN).

Belongs to the bacterial ribosomal protein bS18 family. Part of the 30S ribosomal subunit. Forms a tight heterodimer with protein bS6.

Its function is as follows. Binds as a heterodimer with protein bS6 to the central domain of the 16S rRNA, where it helps stabilize the platform of the 30S subunit. This Treponema pallidum (strain Nichols) protein is Small ribosomal subunit protein bS18.